An 843-amino-acid polypeptide reads, in one-letter code: Eisosome protein 1 (843 aa).

Residues 1–53 form a disordered region; that stretch reads MSLISAVEDRDIHNIGKTSGGGSRTSSITSSKKSLKHGSKSLRKPKVYQTTGE. Serine 2 carries the N-acetylserine modification. Serine 2 bears the Phosphoserine mark. A compositionally biased stretch (basic residues) spans 33 to 46; the sequence is KSLKHGSKSLRKPK. Phosphoserine is present on residues serine 88 and serine 130. Positions 120-174 are disordered; that stretch reads KMGPKVVRNNSITSATSKTSKESQTKRKSKESPGAAASKAYSMTMETTSLSSQTN. Composition is skewed to polar residues over residues 127 to 137 and 163 to 174; these read RNNSITSATSK and TMETTSLSSQTN. Residues serine 182, serine 401, serine 584, and serine 710 each carry the phosphoserine modification. Residues 717–843 form a disordered region; that stretch reads DLPTQLEKIE…QDAISNQEKK (127 aa). Position 720 is a phosphothreonine (threonine 720). The span at 752–764 shows a compositional bias: low complexity; it reads STAAKEATETSSA. Residues serine 763 and serine 775 each carry the phosphoserine modification. A compositionally biased stretch (basic and acidic residues) spans 781-797; that stretch reads SGKEDANDCKSAEHSKE. Over residues 798–810 the composition is skewed to polar residues; it reads ISVSQKAGNNKSL. Serine 816, serine 828, serine 829, and serine 838 each carry phosphoserine.

This sequence belongs to the EIS1 family.

It localises to the cytoplasmic granule. Its subcellular location is the cell membrane. Its function is as follows. Required for normal formation of eisosomes, large cytoplasmic protein assemblies that localize to specialized domains on plasma membrane and mark the site of endocytosis. The protein is Eisosome protein 1 (EIS1) of Saccharomyces cerevisiae (strain ATCC 204508 / S288c) (Baker's yeast).